The sequence spans 656 residues: Threonine--tRNA ligase (656 aa).

The TGS domain maps to 1 to 63 (MAEIQLTFPD…LEDGAIEIIT (63 aa)). The interval 243–541 (DHRVIGNQLD…LTEIYKGAFP (299 aa)) is catalytic. The Zn(2+) site is built by Cys-337, His-388, and His-518.

The protein belongs to the class-II aminoacyl-tRNA synthetase family. As to quaternary structure, homodimer. The cofactor is Zn(2+).

The protein resides in the cytoplasm. The enzyme catalyses tRNA(Thr) + L-threonine + ATP = L-threonyl-tRNA(Thr) + AMP + diphosphate + H(+). Catalyzes the attachment of threonine to tRNA(Thr) in a two-step reaction: L-threonine is first activated by ATP to form Thr-AMP and then transferred to the acceptor end of tRNA(Thr). Also edits incorrectly charged L-seryl-tRNA(Thr). This chain is Threonine--tRNA ligase, found in Latilactobacillus sakei subsp. sakei (strain 23K) (Lactobacillus sakei subsp. sakei).